Reading from the N-terminus, the 671-residue chain is DNA ligase (671 aa).

Residues Asp-32–Asp-36, Ser-81–Leu-82, and Glu-113 each bind NAD(+). The N6-AMP-lysine intermediate role is filled by Lys-115. Residues Arg-136, Glu-173, Lys-290, and Lys-314 each contribute to the NAD(+) site. The Zn(2+) site is built by Cys-408, Cys-411, Cys-426, and Cys-432. The BRCT domain occupies Glu-593–Ser-671.

It belongs to the NAD-dependent DNA ligase family. LigA subfamily. The cofactor is Mg(2+). Requires Mn(2+) as cofactor.

The catalysed reaction is NAD(+) + (deoxyribonucleotide)n-3'-hydroxyl + 5'-phospho-(deoxyribonucleotide)m = (deoxyribonucleotide)n+m + AMP + beta-nicotinamide D-nucleotide.. Functionally, DNA ligase that catalyzes the formation of phosphodiester linkages between 5'-phosphoryl and 3'-hydroxyl groups in double-stranded DNA using NAD as a coenzyme and as the energy source for the reaction. It is essential for DNA replication and repair of damaged DNA. The sequence is that of DNA ligase from Escherichia coli O7:K1 (strain IAI39 / ExPEC).